Consider the following 478-residue polypeptide: Leukotoxin secretion protein D (478 aa).

At 1–59 (MKIWLSGIYEFFLRYKNTWAEVWKIRKELDHPNRKKDESEFLPAHLDLIETPVSKKPRL) the chain is on the cytoplasmic side. The chain crosses the membrane as a helical span at residues 60-80 (IAYLIMLFLVVAIVLASVSKV). The Periplasmic portion of the chain corresponds to 81-478 (EIVATAPGKL…ESVTESLRER (398 aa)).

Belongs to the membrane fusion protein (MFP) (TC 8.A.1) family.

It is found in the cell inner membrane. Functionally, involved in the transport of the Leukotoxin. This is Leukotoxin secretion protein D (lktD) from Mannheimia haemolytica (Pasteurella haemolytica).